The sequence spans 301 residues: Immediate early response gene 5-like protein (301 aa).

The protein belongs to the IER family.

This chain is Immediate early response gene 5-like protein (ier5l), found in Danio rerio (Zebrafish).